A 201-amino-acid polypeptide reads, in one-letter code: Cytochrome c oxidase assembly protein CtaG (201 aa).

The Cytoplasmic segment spans residues 1-13 (MTDQGENEKKQRR). The chain crosses the membrane as a helical; Signal-anchor for type II membrane protein span at residues 14–36 (SNATIAVACLSFFVCMIGAAYAS). Topologically, residues 37–201 (VPLYRIFCQV…KAVGSTRNGG (165 aa)) are periplasmic.

Belongs to the COX11/CtaG family.

It localises to the cell inner membrane. Exerts its effect at some terminal stage of cytochrome c oxidase synthesis, probably by being involved in the insertion of the copper B into subunit I. This Brucella ovis (strain ATCC 25840 / 63/290 / NCTC 10512) protein is Cytochrome c oxidase assembly protein CtaG.